The chain runs to 349 residues: MKTLTTDVAIIGAGPVGLFQIFELGLQGLSTVVIDSLPEIGGQCSELYPDKPIYDIPALPNAKASEVIDNLWQQAAIFDPTFLLAERVEHIEKVSEHSFIVTTHKQTQIHCRAVVIAAGNGAFSPVKLKLPLIDKFEDTQLFYRISNIEHFRDKNVVVLGGGDSALDWSLTLQKTAKSVLLIHRSSNFKAAKSSVNKMYELCEQLKMQFLCGQVSSFQEKENKLTGLTITSKDGVNRRVELDELVVLFGMSPKLGPIDNWQLEMHQHQIKVDTQSFQTSVTGIYAVGDINYYPGKRKLILSGFHEAALAAFSIAETVLEKDRIPTLYTTTSPVVHQRLGVEHSLEAMLS.

Asp-35, Gln-43, Tyr-48, Val-88, Phe-123, Asp-288, and Thr-329 together coordinate FAD.

Belongs to the ferredoxin--NADP reductase type 2 family. In terms of assembly, homodimer. Requires FAD as cofactor.

It catalyses the reaction 2 reduced [2Fe-2S]-[ferredoxin] + NADP(+) + H(+) = 2 oxidized [2Fe-2S]-[ferredoxin] + NADPH. This is Ferredoxin--NADP reductase from Colwellia psychrerythraea (strain 34H / ATCC BAA-681) (Vibrio psychroerythus).